Consider the following 150-residue polypeptide: 3-dehydroquinate dehydratase (150 aa).

Catalysis depends on tyrosine 26, which acts as the Proton acceptor. Positions 77, 83, and 90 each coordinate substrate. The active-site Proton donor is histidine 103. Substrate contacts are provided by residues 104–105 (LS) and arginine 114.

It belongs to the type-II 3-dehydroquinase family. As to quaternary structure, homododecamer.

The catalysed reaction is 3-dehydroquinate = 3-dehydroshikimate + H2O. It functions in the pathway metabolic intermediate biosynthesis; chorismate biosynthesis; chorismate from D-erythrose 4-phosphate and phosphoenolpyruvate: step 3/7. Functionally, catalyzes a trans-dehydration via an enolate intermediate. The chain is 3-dehydroquinate dehydratase from Photobacterium profundum (strain SS9).